The chain runs to 176 residues: Co-chaperone protein HscB homolog (176 aa).

The region spanning 7–79 (THFSLFGLPE…LKRATYLLHL (73 aa)) is the J domain.

The protein belongs to the HscB family. In terms of assembly, interacts with HscA and stimulates its ATPase activity.

Functionally, co-chaperone involved in the maturation of iron-sulfur cluster-containing proteins. Seems to help targeting proteins to be folded toward HscA. The chain is Co-chaperone protein HscB homolog from Ralstonia nicotianae (strain ATCC BAA-1114 / GMI1000) (Ralstonia solanacearum).